The following is a 346-amino-acid chain: Ribosomal RNA small subunit methyltransferase H (346 aa).

S-adenosyl-L-methionine contacts are provided by residues 46-48 (GGY), D63, F90, D113, and Q120. The segment at 270–327 (GGSAGSRHMPETHMRLPSFTPAVKGAVGPTPEEEERNPRARSAKLRAGIRTENSPLED) is disordered.

The protein belongs to the methyltransferase superfamily. RsmH family.

The protein resides in the cytoplasm. The enzyme catalyses cytidine(1402) in 16S rRNA + S-adenosyl-L-methionine = N(4)-methylcytidine(1402) in 16S rRNA + S-adenosyl-L-homocysteine + H(+). Its function is as follows. Specifically methylates the N4 position of cytidine in position 1402 (C1402) of 16S rRNA. In Brucella ovis (strain ATCC 25840 / 63/290 / NCTC 10512), this protein is Ribosomal RNA small subunit methyltransferase H.